Consider the following 482-residue polypeptide: ATP synthase subunit beta (482 aa).

162 to 169 (GGAGVGKT) provides a ligand contact to ATP.

This sequence belongs to the ATPase alpha/beta chains family. In terms of assembly, F-type ATPases have 2 components, CF(1) - the catalytic core - and CF(0) - the membrane proton channel. CF(1) has five subunits: alpha(3), beta(3), gamma(1), delta(1), epsilon(1). CF(0) has four main subunits: a(1), b(1), b'(1) and c(9-12).

Its subcellular location is the cellular thylakoid membrane. The catalysed reaction is ATP + H2O + 4 H(+)(in) = ADP + phosphate + 5 H(+)(out). Produces ATP from ADP in the presence of a proton gradient across the membrane. The catalytic sites are hosted primarily by the beta subunits. This Nostoc punctiforme (strain ATCC 29133 / PCC 73102) protein is ATP synthase subunit beta.